Reading from the N-terminus, the 240-residue chain is Demethylmenaquinone methyltransferase (240 aa).

S-adenosyl-L-methionine contacts are provided by residues Thr62, Asp80, 102–103 (DA), and Ser119.

It belongs to the class I-like SAM-binding methyltransferase superfamily. MenG/UbiE family.

The enzyme catalyses a 2-demethylmenaquinol + S-adenosyl-L-methionine = a menaquinol + S-adenosyl-L-homocysteine + H(+). It participates in quinol/quinone metabolism; menaquinone biosynthesis; menaquinol from 1,4-dihydroxy-2-naphthoate: step 2/2. Methyltransferase required for the conversion of demethylmenaquinol (DMKH2) to menaquinol (MKH2). The polypeptide is Demethylmenaquinone methyltransferase (Beutenbergia cavernae (strain ATCC BAA-8 / DSM 12333 / CCUG 43141 / JCM 11478 / NBRC 16432 / NCIMB 13614 / HKI 0122)).